Consider the following 1386-residue polypeptide: DNA-directed RNA polymerase subunit beta'' (1386 aa).

Zn(2+) contacts are provided by cysteine 224, cysteine 294, cysteine 301, and cysteine 304.

It belongs to the RNA polymerase beta' chain family. RpoC2 subfamily. In terms of assembly, in plastids the minimal PEP RNA polymerase catalytic core is composed of four subunits: alpha, beta, beta', and beta''. When a (nuclear-encoded) sigma factor is associated with the core the holoenzyme is formed, which can initiate transcription. It depends on Zn(2+) as a cofactor.

Its subcellular location is the plastid. The protein resides in the chloroplast. It catalyses the reaction RNA(n) + a ribonucleoside 5'-triphosphate = RNA(n+1) + diphosphate. DNA-dependent RNA polymerase catalyzes the transcription of DNA into RNA using the four ribonucleoside triphosphates as substrates. This is DNA-directed RNA polymerase subunit beta'' from Acorus calamus (Sweet flag).